We begin with the raw amino-acid sequence, 585 residues long: Efflux pump dotC (585 aa).

The span at 1–34 shows a compositional bias: basic and acidic residues; it reads MSEDHTKADNLSEKDPHSPERSDSSSHEDAHARE. The interval 1-45 is disordered; the sequence is MSEDHTKADNLSEKDPHSPERSDSSSHEDAHAREEEESSDDDGAL. Asparagine 10 is a glycosylation site (N-linked (GlcNAc...) asparagine). A compositionally biased stretch (acidic residues) spans 35–44; that stretch reads EEESSDDDGA. Residues 51 to 71 form a helical membrane-spanning segment; the sequence is SLIAIVMIALSLIGLQLAVFL. Asparagine 91 carries an N-linked (GlcNAc...) asparagine glycan. 13 helical membrane passes run 94 to 114, 132 to 152, 158 to 178, 186 to 206, 214 to 234, 247 to 267, 280 to 300, 323 to 343, 353 to 373, 385 to 405, 414 to 434, 449 to 471, and 524 to 544; these read AAYTWVGSAYLLANAASTPIW, ALFMIGSLVCALSINVGMLIT, GAAGGGLLTLVDTIIGDLFSL, GMIGGVWAIACALGPIVGGAF, WCFYINLPIDGLAFGIIFFFL, FAAIDWAGSFFIIGGTLMFLF, SATVICLLVFGVVCIVLFGLV, ALLVAFFHSFVFTSAFYYLPL, PILAGVYILPAVLSTGVSAAA, LIPMYFGMSMMILGYGLLINF, LIIYQLIAGIGNGPNFQAPLV, TATFNFVRNIATAISVVAGQVLY, and SPMWIMYTAFAAAGLFCILLV. Residues 564-585 are disordered; sequence KKAEAERKAERQAKDLEKAQKS.

This sequence belongs to the major facilitator superfamily. TCR/Tet family.

It is found in the cell membrane. The protein localises to the vacuole membrane. In terms of biological role, efflux pump; part of the gene cluster that mediates the biosynthesis of dothistromin (DOTH), a polyketide toxin very similar in structure to the aflatoxin precursor, versicolorin B. One function of dotC may be to transport early-stage dothistromin biosynthetic intermediates from the cytoplasm into vacuoles, thereby affecting the rate of dothistromin production. The polypeptide is Efflux pump dotC (Dothistroma septosporum (Red band needle blight fungus)).